The following is a 213-amino-acid chain: Small ribosomal subunit protein eS1 (213 aa).

Positions 189-213 (ARPEEVAAEEETAVDVDEEDVDVEA) are disordered. Over residues 194–213 (VAAEEETAVDVDEEDVDVEA) the composition is skewed to acidic residues.

Belongs to the eukaryotic ribosomal protein eS1 family.

This chain is Small ribosomal subunit protein eS1, found in Haloarcula marismortui (strain ATCC 43049 / DSM 3752 / JCM 8966 / VKM B-1809) (Halobacterium marismortui).